The chain runs to 166 residues: RNA polymerase sigma factor SigV (166 aa).

The Polymerase core binding signature appears at 38-51 (DIVQESIKKALSSV). A DNA-binding region (H-T-H motif) is located at residues 131-150 (LEEIAEITGENTNTVKTRLY).

It belongs to the sigma-70 factor family. ECF subfamily. Interacts with RsiV.

Sigma factors are initiation factors that promote the attachment of RNA polymerase to specific initiation sites and are then released. Positively regulates the expression of proteins involved in stress responses against bacitracin, paraquat and tellurite. The polypeptide is RNA polymerase sigma factor SigV (sigV) (Bacillus subtilis (strain 168)).